Here is a 302-residue protein sequence, read N- to C-terminus: Recombination-associated protein RdgC (302 aa).

It belongs to the RdgC family.

It is found in the cytoplasm. It localises to the nucleoid. Its function is as follows. May be involved in recombination. This chain is Recombination-associated protein RdgC, found in Halorhodospira halophila (strain DSM 244 / SL1) (Ectothiorhodospira halophila (strain DSM 244 / SL1)).